The primary structure comprises 246 residues: Polyhedrin (246 aa).

This sequence belongs to the polyhedrin family.

Major component of the virus occlusion bodies, which are large proteinaceous structures (polyhedra), that protect the virus from the outside environment for extended periods until they are ingested by insect larvae. The chain is Polyhedrin (PH) from Lepidoptera (butterflies and moths).